We begin with the raw amino-acid sequence, 308 residues long: Isoaspartyl peptidase/L-asparaginase (308 aa).

Methionine 1 is modified (N-acetylmethionine). Threonine 168 acts as the Nucleophile in catalysis. Substrate contacts are provided by residues 196 to 199 (RVGD) and 219 to 222 (TGHG).

Belongs to the Ntn-hydrolase family. In terms of assembly, heterodimer of an alpha and beta chain produced by autocleavage. This heterodimer may then dimerize in turn, giving rise to a heterotetramer. Cleaved into an alpha and beta chain by autocatalysis; this activates the enzyme. The N-terminal residue of the beta subunit is responsible for the nucleophile hydrolase activity.

Its subcellular location is the cytoplasm. The enzyme catalyses L-asparagine + H2O = L-aspartate + NH4(+). It catalyses the reaction Cleavage of a beta-linked Asp residue from the N-terminus of a polypeptide.. In terms of biological role, has both L-asparaginase and beta-aspartyl peptidase activity. May be involved in the production of L-aspartate, which can act as an excitatory neurotransmitter in some brain regions. Is highly active with L-Asp beta-methyl ester. Besides, has catalytic activity toward beta-aspartyl dipeptides and their methyl esters, including beta-L-Asp-L-Phe, beta-L-Asp-L-Phe methyl ester (aspartame), beta-L-Asp-L-Ala, beta-L-Asp-L-Leu and beta-L-Asp-L-Lys. Does not have aspartylglucosaminidase activity and is inactive toward GlcNAc-L-Asn. Likewise, has no activity toward glutamine. The sequence is that of Isoaspartyl peptidase/L-asparaginase (ASRGL1) from Bos taurus (Bovine).